The chain runs to 198 residues: Cytochrome c oxidase assembly protein CtaG (198 aa).

Residues 1–12 are Cytoplasmic-facing; the sequence is MADNGQADRKER. The helical; Signal-anchor for type II membrane protein transmembrane segment at 13–35 threads the bilayer; that stretch reads SNGVIVGTCLAFVAGMIGMAYAA. Over 36 to 198 the chain is Periplasmic; it reads VPLYDMFCRV…QVKAKAENKL (163 aa).

The protein belongs to the COX11/CtaG family.

It localises to the cell inner membrane. Exerts its effect at some terminal stage of cytochrome c oxidase synthesis, probably by being involved in the insertion of the copper B into subunit I. The chain is Cytochrome c oxidase assembly protein CtaG from Rhizobium meliloti (strain 1021) (Ensifer meliloti).